Consider the following 495-residue polypeptide: ATP synthase subunit beta, chloroplastic (495 aa).

172 to 179 (GGAGVGKT) contacts ATP.

This sequence belongs to the ATPase alpha/beta chains family. As to quaternary structure, F-type ATPases have 2 components, CF(1) - the catalytic core - and CF(0) - the membrane proton channel. CF(1) has five subunits: alpha(3), beta(3), gamma(1), delta(1), epsilon(1). CF(0) has four main subunits: a(1), b(1), b'(1) and c(9-12).

The protein resides in the plastid. Its subcellular location is the chloroplast thylakoid membrane. It carries out the reaction ATP + H2O + 4 H(+)(in) = ADP + phosphate + 5 H(+)(out). Functionally, produces ATP from ADP in the presence of a proton gradient across the membrane. The catalytic sites are hosted primarily by the beta subunits. This Hyacinthus orientalis (Common hyacinth) protein is ATP synthase subunit beta, chloroplastic.